Reading from the N-terminus, the 71-residue chain is Stathmin-1-B (71 aa).

Residues 1-67 (KREHEKEVLQ…EIRKGKECKE (67 aa)) are a coiled coil. In terms of domain architecture, SLD spans 1-71 (KREHEKEVLQ…GKECKEPSED (71 aa)).

The protein belongs to the stathmin family. In terms of assembly, binds to two alpha/beta-tubulin heterodimers. Post-translationally, from unphosphorylated forms to highly phosphorylated ones in the mature egg, followed by progressive dephosphorylation from the mid-blastula to the tailbud stage. In terms of tissue distribution, ubiquitous. Mostly abundant in brain and oocytes.

Its subcellular location is the cytoplasm. The protein localises to the cytoskeleton. In terms of biological role, involved in the regulation of the microtubule (MT) filament system by destabilizing microtubules. It prevents assembly and promotes disassembly of microtubules. This is Stathmin-1-B (stmn1-b) from Xenopus laevis (African clawed frog).